The sequence spans 307 residues: GTPase Era (307 aa).

One can recognise an Era-type G domain in the interval 17 to 186 (RCGFVAIVGR…LELIKPYLPE (170 aa)). Positions 25–32 (GRPNVGKS) are G1. 25 to 32 (GRPNVGKS) contacts GTP. Positions 51 to 55 (QTTRN) are G2. Residues 72-75 (DTPG) form a G3 region. Residues 72–76 (DTPGF) and 133–136 (NKID) each bind GTP. The segment at 133-136 (NKID) is G4. Residues 165 to 167 (VSA) are G5. In terms of domain architecture, KH type-2 spans 217–293 (LGEELPYAMN…FLKVWVKVKS (77 aa)).

The protein belongs to the TRAFAC class TrmE-Era-EngA-EngB-Septin-like GTPase superfamily. Era GTPase family. In terms of assembly, monomer.

It localises to the cytoplasm. It is found in the cell inner membrane. Functionally, an essential GTPase that binds both GDP and GTP, with rapid nucleotide exchange. Plays a role in 16S rRNA processing and 30S ribosomal subunit biogenesis and possibly also in cell cycle regulation and energy metabolism. The sequence is that of GTPase Era from Neisseria meningitidis serogroup B (strain ATCC BAA-335 / MC58).